The chain runs to 110 residues: Putative anti-sigma factor antagonist TM_1442 (110 aa).

Residues 4 to 110 (LKLDIVEQDD…FKITDTVEEA (107 aa)) enclose the STAS domain. At S59 the chain carries Phosphoserine.

The protein belongs to the anti-sigma-factor antagonist family. Post-translationally, phosphorylated on a serine residue.

Functionally, in the phosphorylated form it could act as an anti-anti-sigma factor that counteracts an anti-sigma factor and thus releases a sigma factor from inhibition. The protein is Putative anti-sigma factor antagonist TM_1442 of Thermotoga maritima (strain ATCC 43589 / DSM 3109 / JCM 10099 / NBRC 100826 / MSB8).